The sequence spans 255 residues: tRNA (guanine-N(1)-)-methyltransferase (255 aa).

S-adenosyl-L-methionine is bound by residues glycine 113 and 133–138 (IGDYVL).

The protein belongs to the RNA methyltransferase TrmD family. Homodimer.

The protein resides in the cytoplasm. The catalysed reaction is guanosine(37) in tRNA + S-adenosyl-L-methionine = N(1)-methylguanosine(37) in tRNA + S-adenosyl-L-homocysteine + H(+). Specifically methylates guanosine-37 in various tRNAs. This chain is tRNA (guanine-N(1)-)-methyltransferase, found in Enterobacter sp. (strain 638).